Reading from the N-terminus, the 228-residue chain is Homeobox protein Hox-B6a (228 aa).

An Antp-type hexapeptide motif is present at residues 132-137 (VYPWMQ). The segment at residues 150–209 (GRRGRQTYTRYQTLELEKEFHFNRYLTRRRRIEIAHALCLTERQIKIWFQNRRMKWKKEN) is a DNA-binding region (homeobox).

This sequence belongs to the Antp homeobox family.

Its subcellular location is the nucleus. Functionally, sequence-specific transcription factor which is part of a developmental regulatory system that provides cells with specific positional identities on the anterior-posterior axis. The chain is Homeobox protein Hox-B6a (hoxb6a) from Danio rerio (Zebrafish).